The primary structure comprises 184 residues: Ribosome-recycling factor (184 aa).

Belongs to the RRF family.

It is found in the cytoplasm. Functionally, responsible for the release of ribosomes from messenger RNA at the termination of protein biosynthesis. May increase the efficiency of translation by recycling ribosomes from one round of translation to another. The polypeptide is Ribosome-recycling factor (Mycoplasma pneumoniae (strain ATCC 29342 / M129 / Subtype 1) (Mycoplasmoides pneumoniae)).